The sequence spans 224 residues: uncharacterized protein (224 aa).

This is an uncharacterized protein from Listeria innocua serovar 6a (strain ATCC BAA-680 / CLIP 11262).